The primary structure comprises 180 residues: Translation initiation factor IF-3 (180 aa).

This sequence belongs to the IF-3 family. In terms of assembly, monomer.

The protein resides in the cytoplasm. Its function is as follows. IF-3 binds to the 30S ribosomal subunit and shifts the equilibrium between 70S ribosomes and their 50S and 30S subunits in favor of the free subunits, thus enhancing the availability of 30S subunits on which protein synthesis initiation begins. This chain is Translation initiation factor IF-3, found in Mesoplasma florum (strain ATCC 33453 / NBRC 100688 / NCTC 11704 / L1) (Acholeplasma florum).